The chain runs to 629 residues: tRNA uridine 5-carboxymethylaminomethyl modification enzyme MnmG (629 aa).

FAD is bound by residues Gly13 to Gly18, Val125, and Ser180. Gly273–Phe287 is an NAD(+) binding site. Gln370 provides a ligand contact to FAD.

Belongs to the MnmG family. As to quaternary structure, homodimer. Heterotetramer of two MnmE and two MnmG subunits. The cofactor is FAD.

Its subcellular location is the cytoplasm. NAD-binding protein involved in the addition of a carboxymethylaminomethyl (cmnm) group at the wobble position (U34) of certain tRNAs, forming tRNA-cmnm(5)s(2)U34. In Shigella dysenteriae serotype 1 (strain Sd197), this protein is tRNA uridine 5-carboxymethylaminomethyl modification enzyme MnmG.